A 445-amino-acid polypeptide reads, in one-letter code: Phosphoglucosamine mutase (445 aa).

S101 functions as the Phosphoserine intermediate in the catalytic mechanism. Residues S101, D240, D242, and D244 each coordinate Mg(2+). S101 bears the Phosphoserine mark.

It belongs to the phosphohexose mutase family. Mg(2+) is required as a cofactor. Post-translationally, activated by phosphorylation.

It carries out the reaction alpha-D-glucosamine 1-phosphate = D-glucosamine 6-phosphate. In terms of biological role, catalyzes the conversion of glucosamine-6-phosphate to glucosamine-1-phosphate. In Pseudomonas aeruginosa (strain UCBPP-PA14), this protein is Phosphoglucosamine mutase.